Here is a 182-residue protein sequence, read N- to C-terminus: UPF0397 protein BCAH187_A2708 (182 aa).

Transmembrane regions (helical) follow at residues 9–29 (VVAIGIGAALYGILGLWGFSI), 40–60 (AILTVFGALFGPVAGLLIGLI), 71–91 (WGIWWGWVISSGIIGFAMGFI), 114–134 (ITGLIGIVIAIIFAGAFDIIV), and 142–162 (IVIQVLGATIADVIVFLVLGL).

This sequence belongs to the UPF0397 family.

The protein localises to the cell membrane. The sequence is that of UPF0397 protein BCAH187_A2708 from Bacillus cereus (strain AH187).